The primary structure comprises 162 residues: F protein (162 aa).

Residues 1 to 23 (MSTNPKPQKKKTNVTPTVAHRTS) form a disordered region. A compositionally biased stretch (polar residues) spans 13–23 (NVTPTVAHRTS).

It localises to the host cytoplasm. Its subcellular location is the host perinuclear region. In Hepatitis C virus genotype 1a (isolate 1) (HCV), this protein is F protein.